The sequence spans 372 residues: Glutamate 5-kinase (372 aa).

Residue K14 coordinates ATP. Residues S54, D141, and N153 each contribute to the substrate site. Residue 173 to 174 (TD) coordinates ATP. One can recognise a PUA domain in the interval 280 to 358 (RGHVVIDAGA…GEIESVLGYM (79 aa)).

It belongs to the glutamate 5-kinase family.

The protein resides in the cytoplasm. It catalyses the reaction L-glutamate + ATP = L-glutamyl 5-phosphate + ADP. Its pathway is amino-acid biosynthesis; L-proline biosynthesis; L-glutamate 5-semialdehyde from L-glutamate: step 1/2. Its function is as follows. Catalyzes the transfer of a phosphate group to glutamate to form L-glutamate 5-phosphate. This Burkholderia lata (strain ATCC 17760 / DSM 23089 / LMG 22485 / NCIMB 9086 / R18194 / 383) protein is Glutamate 5-kinase.